A 633-amino-acid polypeptide reads, in one-letter code: Phosphomethylpyrimidine synthase (633 aa).

Residues Asn245, Met274, Tyr303, His339, 359 to 361, 400 to 403, and Glu439 contribute to the substrate site; these read SRG and DGLR. His443 contacts Zn(2+). Tyr466 provides a ligand contact to substrate. His507 provides a ligand contact to Zn(2+). Residues Cys587, Cys590, and Cys595 each coordinate [4Fe-4S] cluster.

This sequence belongs to the ThiC family. Homodimer. The cofactor is [4Fe-4S] cluster.

The enzyme catalyses 5-amino-1-(5-phospho-beta-D-ribosyl)imidazole + S-adenosyl-L-methionine = 4-amino-2-methyl-5-(phosphooxymethyl)pyrimidine + CO + 5'-deoxyadenosine + formate + L-methionine + 3 H(+). It participates in cofactor biosynthesis; thiamine diphosphate biosynthesis. In terms of biological role, catalyzes the synthesis of the hydroxymethylpyrimidine phosphate (HMP-P) moiety of thiamine from aminoimidazole ribotide (AIR) in a radical S-adenosyl-L-methionine (SAM)-dependent reaction. This Neisseria meningitidis serogroup A / serotype 4A (strain DSM 15465 / Z2491) protein is Phosphomethylpyrimidine synthase.